The primary structure comprises 102 residues: Protein translation factor SUI1 homolog (102 aa).

Belongs to the SUI1 family.

The sequence is that of Protein translation factor SUI1 homolog from Nitrosopumilus maritimus (strain SCM1).